Consider the following 614-residue polypeptide: GPI transamidase component GAA1 (614 aa).

At 1-19 (MALLEKLHRRIVDMGLVPR) the chain is on the cytoplasmic side. A helical membrane pass occupies residues 20-40 (IIALLPVISMLCALFGFISIA). At 41–356 (ILPMDGQYRR…APRQFVSISS (316 aa)) the chain is on the lumenal side. Residue N87 is glycosylated (N-linked (GlcNAc...) asparagine). Residues 357 to 377 (YLPSAVALSIAFAISSLNAFI) traverse the membrane as a helical segment. Residues 378–394 (NNAYANISLFSEYNLVA) are Cytoplasmic-facing. Residues 395–415 (LLVWFVSLVISFVVSQAFLLI) traverse the membrane as a helical segment. At 416 to 464 (PSSGLLMTISMASCFLPLILSRKIHISEPLSYRLKNVAFLYFSLVSTSL) the chain is on the lumenal side. A helical membrane pass occupies residues 465–485 (LMINFAMALLIGTLAFPMTFV). Over 486 to 535 (KTIVESSSEHEVTTQSSNPIKTEPKDEIELVENHMDTTPATPQQQKQKLK) the chain is Cytoplasmic. Residues 536–556 (NLVLLILTNPFISITLFGLFF) form a helical membrane-spanning segment. Over 557 to 577 (DDEFHGFDIINKLVSAWLDLK) the chain is Lumenal. Residues 578–598 (CWSWFVLCIGWLPCWLLILAS) form a helical membrane-spanning segment. Residues 599–614 (SFESKSVVVRSKEKQS) lie on the Cytoplasmic side of the membrane. The short motif at 610-614 (KEKQS) is the Prevents secretion from ER element.

As to quaternary structure, forms a complex with CDC91, GPI17, GPI16 and GPI8.

The protein localises to the endoplasmic reticulum membrane. The protein operates within glycolipid biosynthesis; glycosylphosphatidylinositol-anchor biosynthesis. Functionally, component of the GPI transamidase complex. Required for a terminal step of GPI anchor attachment onto proteins. Affects endocytosis. This Saccharomyces cerevisiae (strain ATCC 204508 / S288c) (Baker's yeast) protein is GPI transamidase component GAA1 (GAA1).